A 236-amino-acid polypeptide reads, in one-letter code: Methylosome subunit pICln (236 aa).

S2 bears the N-acetylserine mark. Phosphoserine is present on residues S95, S143, S192, S194, S197, and S209. Residues 134–158 (LHPDPEDEDSDDYDGEEYDVEAHEQ) are disordered. Residues 138–152 (PEDEDSDDYDGEEYD) show a composition bias toward acidic residues. At T222 the chain carries Phosphothreonine.

The protein belongs to the pICln (TC 1.A.47) family. Component of the methylosome, a 20S complex containing at least PRMT5/SKB1, WDR77/MEP50 and CLNS1A/pICln. May mediate SNRPD1 and SNRPD3 methylation. Forms a 6S pICln-Sm complex composed of CLNS1A/pICln, SNRPD1, SNRPD2, SNRPE, SNRPF and SNRPG; ring-like structure where CLNS1A/pICln mimics additional Sm proteins and which is unable to assemble into the core snRNP. Interacts with LSM10 and LSM11. In terms of tissue distribution, expressed in most tissues.

It localises to the cytoplasm. The protein localises to the cytosol. Its subcellular location is the nucleus. The protein resides in the cytoskeleton. Functionally, involved in both the assembly of spliceosomal snRNPs and the methylation of Sm proteins. Chaperone that regulates the assembly of spliceosomal U1, U2, U4 and U5 small nuclear ribonucleoproteins (snRNPs), the building blocks of the spliceosome, and thereby plays an important role in the splicing of cellular pre-mRNAs. Most spliceosomal snRNPs contain a common set of Sm proteins SNRPB, SNRPD1, SNRPD2, SNRPD3, SNRPE, SNRPF and SNRPG that assemble in a heptameric protein ring on the Sm site of the small nuclear RNA to form the core snRNP (Sm core). In the cytosol, the Sm proteins SNRPD1, SNRPD2, SNRPE, SNRPF and SNRPG are trapped in an inactive 6S pICln-Sm complex by the chaperone CLNS1A that controls the assembly of the core snRNP. Dissociation by the SMN complex of CLNS1A from the trapped Sm proteins and their transfer to an SMN-Sm complex triggers the assembly of core snRNPs and their transport to the nucleus. This is Methylosome subunit pICln (Clns1a) from Rattus norvegicus (Rat).